Consider the following 215-residue polypeptide: Ceramide-1-phosphate transfer protein (215 aa).

Asp-57, Lys-61, Arg-107, Arg-111, and His-151 together coordinate an N-acylsphingoid base 1-phosphate.

The protein belongs to the GLTP family.

It localises to the cytoplasm. Its subcellular location is the cytosol. It is found in the golgi apparatus. The protein localises to the trans-Golgi network membrane. The protein resides in the cell membrane. It localises to the endosome membrane. Its subcellular location is the nucleus outer membrane. The catalysed reaction is N-(hexadecanoyl)-sphing-4-enine-1-phosphate(in) = N-(hexadecanoyl)-sphing-4-enine-1-phosphate(out). It catalyses the reaction N-(9Z-octadecenoyl)-sphing-4-enine-1-phosphate(in) = N-(9Z-octadecenoyl)-sphing-4-enine-1-phosphate(out). In terms of biological role, mediates the intracellular transfer of ceramide-1-phosphate (C1P) between organelle membranes and the cell membrane. Required for normal structure of the Golgi stacks. Can bind phosphoceramides with a variety of aliphatic chains, but has a preference for lipids with saturated C16:0 or monounsaturated C18:1 aliphatic chains, and is inefficient with phosphoceramides containing lignoceryl (C24:0). Plays a role in the regulation of the cellular levels of ceramide-1-phosphate, and thereby contributes to the regulation of phospholipase PLA2G4A activity and the release of arachidonic acid. Has no activity with galactosylceramide, lactosylceramide, sphingomyelin, phosphatidylcholine, phosphatidic acid and ceramide. C1P transfer is stimulated by phosphatidylserine in C1P source vesicles. Regulates autophagy and pyroptosis, but not apoptosis. The sequence is that of Ceramide-1-phosphate transfer protein (cptp) from Xenopus laevis (African clawed frog).